Reading from the N-terminus, the 890-residue chain is DNA mismatch repair protein MutS (890 aa).

634–641 is a binding site for ATP; that stretch reads GPNMGGKS.

This sequence belongs to the DNA mismatch repair MutS family.

Its function is as follows. This protein is involved in the repair of mismatches in DNA. It is possible that it carries out the mismatch recognition step. This protein has a weak ATPase activity. The sequence is that of DNA mismatch repair protein MutS from Burkholderia pseudomallei (strain K96243).